Reading from the N-terminus, the 470-residue chain is Cell division protein FtsP (470 aa).

A signal peptide (tat-type signal) is located at residues 1 to 27; sequence MSLSRRQFIQASGIALCAGAVPLKASA. Positions 229–287 constitute a Plastocyanin-like domain; it reads VRLRLLNASNSRRYQLQMSDGRPLHVISGDQGFLPAPVSVKQLSLAPGERREILVDMSN.

It belongs to the FtsP family. Predicted to be exported by the Tat system. The position of the signal peptide cleavage has not been experimentally proven.

It is found in the periplasm. Its function is as follows. Cell division protein that is required for growth during stress conditions. May be involved in protecting or stabilizing the divisomal assembly under conditions of stress. The protein is Cell division protein FtsP of Shigella dysenteriae serotype 1 (strain Sd197).